Here is a 322-residue protein sequence, read N- to C-terminus: Ferrochelatase (322 aa).

Residues H193 and E274 each contribute to the Fe cation site.

It belongs to the ferrochelatase family.

Its subcellular location is the cytoplasm. The catalysed reaction is heme b + 2 H(+) = protoporphyrin IX + Fe(2+). It participates in porphyrin-containing compound metabolism; protoheme biosynthesis; protoheme from protoporphyrin-IX: step 1/1. In terms of biological role, catalyzes the ferrous insertion into protoporphyrin IX. The polypeptide is Ferrochelatase (Photobacterium profundum (strain SS9)).